The chain runs to 488 residues: Protein nucleotidyltransferase YdiU (488 aa).

Positions 91, 93, 94, 114, 126, 127, 177, and 184 each coordinate ATP. D253 acts as the Proton acceptor in catalysis. Mg(2+) is bound by residues N254 and D263. D263 lines the ATP pocket.

Belongs to the SELO family. The cofactor is Mg(2+). Requires Mn(2+) as cofactor.

It carries out the reaction L-seryl-[protein] + ATP = 3-O-(5'-adenylyl)-L-seryl-[protein] + diphosphate. The catalysed reaction is L-threonyl-[protein] + ATP = 3-O-(5'-adenylyl)-L-threonyl-[protein] + diphosphate. It catalyses the reaction L-tyrosyl-[protein] + ATP = O-(5'-adenylyl)-L-tyrosyl-[protein] + diphosphate. The enzyme catalyses L-histidyl-[protein] + UTP = N(tele)-(5'-uridylyl)-L-histidyl-[protein] + diphosphate. It carries out the reaction L-seryl-[protein] + UTP = O-(5'-uridylyl)-L-seryl-[protein] + diphosphate. The catalysed reaction is L-tyrosyl-[protein] + UTP = O-(5'-uridylyl)-L-tyrosyl-[protein] + diphosphate. Nucleotidyltransferase involved in the post-translational modification of proteins. It can catalyze the addition of adenosine monophosphate (AMP) or uridine monophosphate (UMP) to a protein, resulting in modifications known as AMPylation and UMPylation. The polypeptide is Protein nucleotidyltransferase YdiU (Bacillus thuringiensis (strain Al Hakam)).